We begin with the raw amino-acid sequence, 441 residues long: Ribosomal protein uS12 methylthiotransferase RimO (441 aa).

Residues 6–116 (PKVGFVSLGC…VMTAVHANLP (111 aa)) form the MTTase N-terminal domain. Positions 15, 51, 80, 147, 151, and 154 each coordinate [4Fe-4S] cluster. Residues 133 to 370 (LTPQHYAYLK…MEVQESISAE (238 aa)) form the Radical SAM core domain. One can recognise a TRAM domain in the interval 373–439 (RRKIGRIETV…GHDLWAAPPA (67 aa)).

This sequence belongs to the methylthiotransferase family. RimO subfamily. The cofactor is [4Fe-4S] cluster.

It localises to the cytoplasm. It carries out the reaction L-aspartate(89)-[ribosomal protein uS12]-hydrogen + (sulfur carrier)-SH + AH2 + 2 S-adenosyl-L-methionine = 3-methylsulfanyl-L-aspartate(89)-[ribosomal protein uS12]-hydrogen + (sulfur carrier)-H + 5'-deoxyadenosine + L-methionine + A + S-adenosyl-L-homocysteine + 2 H(+). Functionally, catalyzes the methylthiolation of an aspartic acid residue of ribosomal protein uS12. This chain is Ribosomal protein uS12 methylthiotransferase RimO, found in Methylobacillus flagellatus (strain ATCC 51484 / DSM 6875 / VKM B-1610 / KT).